The primary structure comprises 137 residues: MSDLPVAPTPAEPVKYGERAIEAGQLITFPNPRPGRDYDIHITLPEFTCKCPFSGYPDFATIYLTYVPHEKVVELKALKLYVNSFRDRYISHEEVVHVVLDDFVAAADPLRVQIKGDFNPRGNVHMVVEARHTRPGT.

Catalysis depends on C51, which acts as the Thioimide intermediate. Residue D58 is the Proton donor of the active site. Residues 73 to 75 and 92 to 93 each bind substrate; these read VEL and HE.

The protein belongs to the GTP cyclohydrolase I family. QueF type 1 subfamily.

The protein localises to the cytoplasm. The catalysed reaction is 7-aminomethyl-7-carbaguanine + 2 NADP(+) = 7-cyano-7-deazaguanine + 2 NADPH + 3 H(+). Its pathway is tRNA modification; tRNA-queuosine biosynthesis. In terms of biological role, catalyzes the NADPH-dependent reduction of 7-cyano-7-deazaguanine (preQ0) to 7-aminomethyl-7-deazaguanine (preQ1). The polypeptide is NADPH-dependent 7-cyano-7-deazaguanine reductase (Gloeobacter violaceus (strain ATCC 29082 / PCC 7421)).